Consider the following 384-residue polypeptide: Beta-glucuronosyltransferase GlcAT14C (384 aa).

Topologically, residues 1 to 11 (MKRSHISSPRS) are cytoplasmic. The chain crosses the membrane as a signal-anchor for type II membrane protein span at residues 12–34 (YSRPAISIFGVFLLFLLVLTLSS). Residues 35 to 384 (RKPSDSSSGL…HENFRAKQCK (350 aa)) are Lumenal-facing. N-linked (GlcNAc...) asparagine glycosylation is found at N156, N285, and N306.

It belongs to the glycosyltransferase 14 family.

The protein localises to the golgi apparatus membrane. Functionally, beta-glucuronosyltransferase involved in the biosynthesis of type II arabinogalactan (AG). Modifies both the beta-1,6-linked galactan and beta-1,3-linked galactan present in type II AG. This is Beta-glucuronosyltransferase GlcAT14C from Arabidopsis thaliana (Mouse-ear cress).